A 676-amino-acid chain; its full sequence is DNA ligase (676 aa).

NAD(+)-binding positions include 35 to 39 (DAEYD), 84 to 85 (SL), and E118. Residue K120 is the N6-AMP-lysine intermediate of the active site. NAD(+) contacts are provided by R141, E176, K284, and K308. Residues C402, C405, C420, and C426 each coordinate Zn(2+). In terms of domain architecture, BRCT spans 595–676 (SYLSLIHGKI…WLQYTQSSEN (82 aa)).

The protein belongs to the NAD-dependent DNA ligase family. LigA subfamily. Mg(2+) serves as cofactor. Mn(2+) is required as a cofactor.

The enzyme catalyses NAD(+) + (deoxyribonucleotide)n-3'-hydroxyl + 5'-phospho-(deoxyribonucleotide)m = (deoxyribonucleotide)n+m + AMP + beta-nicotinamide D-nucleotide.. Functionally, DNA ligase that catalyzes the formation of phosphodiester linkages between 5'-phosphoryl and 3'-hydroxyl groups in double-stranded DNA using NAD as a coenzyme and as the energy source for the reaction. It is essential for DNA replication and repair of damaged DNA. This chain is DNA ligase, found in Ehrlichia chaffeensis (strain ATCC CRL-10679 / Arkansas).